Reading from the N-terminus, the 316-residue chain is ATP synthase gamma chain (316 aa).

The protein belongs to the ATPase gamma chain family. F-type ATPases have 2 components, CF(1) - the catalytic core - and CF(0) - the membrane proton channel. CF(1) has five subunits: alpha(3), beta(3), gamma(1), delta(1), epsilon(1). CF(0) has three main subunits: a, b and c.

It is found in the cellular thylakoid membrane. Its function is as follows. Produces ATP from ADP in the presence of a proton gradient across the membrane. The gamma chain is believed to be important in regulating ATPase activity and the flow of protons through the CF(0) complex. This is ATP synthase gamma chain from Prochlorococcus marinus (strain NATL1A).